The chain runs to 441 residues: C4-dicarboxylate transport protein (441 aa).

Helical transmembrane passes span 9–29 (SLYF…HFMP), 45–65 (LVKM…IAGM), 79–99 (LLYF…VVNV), 145–165 (AFAE…GFAL), 187–207 (FAAI…AMAF), 220–240 (LAAL…LVLG), 308–328 (IYLT…LTLT), and 356–376 (AATL…ILGI).

The protein belongs to the dicarboxylate/amino acid:cation symporter (DAACS) (TC 2.A.23) family.

It localises to the cell inner membrane. Its function is as follows. Responsible for the transport of dicarboxylates such as succinate, fumarate, and malate from the periplasm across the membrane. This chain is C4-dicarboxylate transport protein, found in Laribacter hongkongensis (strain HLHK9).